A 414-amino-acid polypeptide reads, in one-letter code: Glutamyl-tRNA reductase (414 aa).

Residues 48–51, S104, 109–111, and Q115 contribute to the substrate site; these read TCNR and EAQ. C49 (nucleophile) is an active-site residue. An NADP(+)-binding site is contributed by 184–189; it reads GAGEMI.

It belongs to the glutamyl-tRNA reductase family. In terms of assembly, homodimer.

It catalyses the reaction (S)-4-amino-5-oxopentanoate + tRNA(Glu) + NADP(+) = L-glutamyl-tRNA(Glu) + NADPH + H(+). It participates in porphyrin-containing compound metabolism; protoporphyrin-IX biosynthesis; 5-aminolevulinate from L-glutamyl-tRNA(Glu): step 1/2. Functionally, catalyzes the NADPH-dependent reduction of glutamyl-tRNA(Glu) to glutamate 1-semialdehyde (GSA). The protein is Glutamyl-tRNA reductase of Methylobacillus flagellatus (strain ATCC 51484 / DSM 6875 / VKM B-1610 / KT).